We begin with the raw amino-acid sequence, 264 residues long: Proliferating cell nuclear antigen (264 aa).

A DNA-binding region spans residues 61–80 (RCDRNISMGMNLGNMAKMLK).

It belongs to the PCNA family.

The protein resides in the nucleus. In terms of biological role, this protein is an auxiliary protein of DNA polymerase delta and is involved in the control of eukaryotic DNA replication by increasing the polymerase's processibility during elongation of the leading strand. The polypeptide is Proliferating cell nuclear antigen (Daucus carota (Wild carrot)).